The chain runs to 438 residues: Gamma-glutamyl phosphate reductase (438 aa).

This sequence belongs to the gamma-glutamyl phosphate reductase family.

Its subcellular location is the cytoplasm. The enzyme catalyses L-glutamate 5-semialdehyde + phosphate + NADP(+) = L-glutamyl 5-phosphate + NADPH + H(+). The protein operates within amino-acid biosynthesis; L-proline biosynthesis; L-glutamate 5-semialdehyde from L-glutamate: step 2/2. In terms of biological role, catalyzes the NADPH-dependent reduction of L-glutamate 5-phosphate into L-glutamate 5-semialdehyde and phosphate. The product spontaneously undergoes cyclization to form 1-pyrroline-5-carboxylate. The sequence is that of Gamma-glutamyl phosphate reductase from Prochlorococcus marinus (strain MIT 9313).